The sequence spans 1108 residues: Folliculin-interacting protein 2 (1108 aa).

Residues 38-456 (FGLSDIRLLV…TVMPVDHPPI (419 aa)) form the uDENN FNIP1/2-type domain. Disordered regions lie at residues 89-112 (QESS…GGSL), 209-233 (RTGS…DRDS), 598-635 (SEGV…AEPD), and 649-671 (QNDQ…PRVR). Positions 91–106 (SSSSSGSSSSGSSSSH) are enriched in low complexity. 2 positions are modified to phosphoserine: S212 and S217. In terms of domain architecture, cDENN FNIP1/2-type spans 464–1034 (TSQSVNMLAK…VSSLLQSILQ (571 aa)). The tract at residues 540–905 (DDQVINGSKI…DEACVLALLE (366 aa)) is interaction with PRKAA1. Positions 606 to 620 (LGHKPEKNRCKRPEQ) are enriched in basic and acidic residues. Over residues 652–663 (QEATQDCSSSPP) the composition is skewed to polar residues. Phosphoserine is present on residues S720, S721, and S723. A dDENN FNIP1/2-type domain is found at 1044–1099 (FCIMHLEDRLQEMYLKSKMLSEYLRGHTRVHVKELSVVLGIESNDLPLLTAIASTH).

This sequence belongs to the FNIP family. Homodimer and homomultimer. Heterodimer and heteromultimer with FNIP1. Interacts (via C-terminus) with FLCN (via C-terminus). Phosphorylated FLCN is preferentially bound. Component of the lysosomal folliculin complex (LFC), composed of FLCN, FNIP1 (or FNIP2), RagA/RRAGA or RagB/RRAGB GDP-bound, RagC/RRAGC or RagD/RRAGD GTP-bound, and Ragulator. Interacts with PRKAA1, PRKAB1 and PRKAG1 subunits of 5'-AMP-activated protein kinase. Interacts with HSP70, HSP90AA1, STIP1, PTGES3, CDC37, BRAF, GCR and CDK4. Post-translationally, phosphorylated by AMPK.

Its subcellular location is the lysosome membrane. The protein resides in the cytoplasm. Its function is as follows. Binding partner of the GTPase-activating protein FLCN: involved in the cellular response to amino acid availability by regulating the non-canonical mTORC1 signaling cascade controlling the MiT/TFE factors TFEB and TFE3. Required to promote FLCN recruitment to lysosomes and interaction with Rag GTPases, leading to activation of the non-canonical mTORC1 signaling. In low-amino acid conditions, component of the lysosomal folliculin complex (LFC) on the membrane of lysosomes, which inhibits the GTPase-activating activity of FLCN, thereby inactivating mTORC1 and promoting nuclear translocation of TFEB and TFE3. Upon amino acid restimulation, disassembly of the LFC complex liberates the GTPase-activating activity of FLCN, leading to activation of mTORC1 and subsequent inactivation of TFEB and TFE3. Together with FLCN, regulates autophagy: following phosphorylation by ULK1, interacts with GABARAP and promotes autophagy. In addition to its role in mTORC1 signaling, also acts as a co-chaperone of HSP90AA1/Hsp90: inhibits the ATPase activity of HSP90AA1/Hsp90, leading to activate both kinase and non-kinase client proteins of HSP90AA1/Hsp90. Acts as a scaffold to load client protein FLCN onto HSP90AA1/Hsp90. Competes with the activating co-chaperone AHSA1 for binding to HSP90AA1, thereby providing a reciprocal regulatory mechanism for chaperoning of client proteins. May play a role in the signal transduction pathway of apoptosis induced by O6-methylguanine-mispaired lesions. The polypeptide is Folliculin-interacting protein 2 (Mus musculus (Mouse)).